A 512-amino-acid polypeptide reads, in one-letter code: ETS translocation variant 3 (512 aa).

The ETS DNA-binding region spans 35–116; that stretch reads IQLWHFILEL…KGKRFTYKFN (82 aa). The tract at residues 136–222 is disordered; that stretch reads VPQSAPPVPT…NAIGGGGIGH (87 aa). A phosphoserine mark is found at Ser139, Ser159, and Ser315. Polar residues predominate over residues 158–184; sequence HSPTNDVQPGRFSASSLTASGQESSNG. The tract at residues 336 to 512 is disordered; the sequence is PEESTQFSIK…QGLATAAADA (177 aa). 3 stretches are compositionally biased toward basic and acidic residues: residues 380 to 406, 453 to 468, and 479 to 491; these read IKVEPASEKDPESLRQSAREKEEHTQE, DRPGKEPSAPEKKEDA, and RWNDDPEARELSK. Lys381 participates in a covalent cross-link: Glycyl lysine isopeptide (Lys-Gly) (interchain with G-Cter in SUMO2). Lys388 is subject to N6-acetyllysine; alternate. Residue Lys388 forms a Glycyl lysine isopeptide (Lys-Gly) (interchain with G-Cter in SUMO2); alternate linkage.

The protein belongs to the ETS family.

The protein localises to the nucleus. Functionally, transcriptional repressor that contribute to growth arrest during terminal macrophage differentiation by repressing target genes involved in Ras-dependent proliferation. Represses MMP1 promoter activity. This Homo sapiens (Human) protein is ETS translocation variant 3 (ETV3).